Reading from the N-terminus, the 410-residue chain is Histone-lysine N-methyltransferase SUV39H2 (410 aa).

One can recognise a Chromo domain in the interval 47–105 (YEVEYLCDYKVVKDMEYYLVKWKGWPDSTNTWEPLQNLKCPLLLQQFSNDKHNYLSQVK). Residues 189–247 (FGCSCTDCFFQKCCPAEAGVLLAYNKNQQIKIPPGTPIYECNSRCQCGPDCPNRIVQKG) form the Pre-SET domain. Residues C191, C193, C196, C201, C202, C229, C233, C235, and C239 each coordinate Zn(2+). The 124-residue stretch at 250–373 (YSLCIFRTSN…AGEELTFDYQ (124 aa)) folds into the SET domain. Residues 261 to 263 (RGW), Y304, and 330 to 331 (NH) contribute to the S-adenosyl-L-methionine site. C333 provides a ligand contact to Zn(2+). 3 positions are modified to phosphoserine: S381, S384, and S388. The Post-SET domain maps to 394-410 (VRTVCKCGAVTCRGYLN). The Zn(2+) site is built by C398, C400, and C405.

This sequence belongs to the class V-like SAM-binding methyltransferase superfamily. Histone-lysine methyltransferase family. Suvar3-9 subfamily. As to quaternary structure, interacts with SMAD5. The large PER complex involved in the histone methylation is composed of at least PER2, CBX3, TRIM28, SUV39H1 and/or SUV39H2; CBX3 mediates the formation of the complex. Post-translationally, ubiquitinated by the DCX(DCAF13) E3 ubiquitin ligase complex, leading to its degradation.

The protein localises to the nucleus. It is found in the chromosome. It localises to the centromere. The enzyme catalyses L-lysyl(9)-[histone H3] + 3 S-adenosyl-L-methionine = N(6),N(6),N(6)-trimethyl-L-lysyl(9)-[histone H3] + 3 S-adenosyl-L-homocysteine + 3 H(+). Its function is as follows. Histone methyltransferase that specifically trimethylates 'Lys-9' of histone H3 using monomethylated H3 'Lys-9' as substrate. H3 'Lys-9' trimethylation represents a specific tag for epigenetic transcriptional repression by recruiting HP1 (CBX1, CBX3 and/or CBX5) proteins to methylated histones. Mainly functions in heterochromatin regions, thereby playing a central role in the establishment of constitutive heterochromatin at pericentric and telomere regions. H3 'Lys-9' trimethylation is also required to direct DNA methylation at pericentric repeats. SUV39H1 is targeted to histone H3 via its interaction with RB1 and is involved in many processes, such as cell cycle regulation, transcriptional repression and regulation of telomere length. May participate in regulation of higher-order chromatin organization during spermatogenesis. Recruited by the large PER complex to the E-box elements of the circadian target genes such as PER2 itself or PER1, contributes to the conversion of local chromatin to a heterochromatin-like repressive state through H3 'Lys-9' trimethylation. This chain is Histone-lysine N-methyltransferase SUV39H2 (SUV39H2), found in Macaca fascicularis (Crab-eating macaque).